The sequence spans 305 residues: MSKIPVIVIVGPTAVGKTSLSIELAKKLDGEIISGDSMQVYRGLDIGTAKITPEEMDEIKHYLIDVTDPSEPFTAAKFQTETRKWIETIHQAGKLPIIVGGTGLYIQSVFYDYDFGNVSEDKAYRAELEQLNKTLLWQMLEQQDPESAAQIHENNKRRVIRALEVMHLTGKPFSEYQVHNVLNDTYKPLFLGLDLDRALLYERINQRVNLMFEEGLVTEAKKLYDQHLVDVPAVCGIGYKELFPYFEGKSSLEEAKELIQKNSRHFAKRQLTWFRNRMEIDWIQAGVSTTEAEALNKAETFLSVK.

11–18 (GPTAVGKT) contacts ATP. 13 to 18 (TAVGKT) is a binding site for substrate. The interaction with substrate tRNA stretch occupies residues 36-39 (DSMQ).

Belongs to the IPP transferase family. Monomer. Requires Mg(2+) as cofactor.

The catalysed reaction is adenosine(37) in tRNA + dimethylallyl diphosphate = N(6)-dimethylallyladenosine(37) in tRNA + diphosphate. Functionally, catalyzes the transfer of a dimethylallyl group onto the adenine at position 37 in tRNAs that read codons beginning with uridine, leading to the formation of N6-(dimethylallyl)adenosine (i(6)A). This Listeria monocytogenes serovar 1/2a (strain ATCC BAA-679 / EGD-e) protein is tRNA dimethylallyltransferase.